Consider the following 397-residue polypeptide: Zinc finger CCCH domain-containing protein 33 (397 aa).

C3H1-type zinc fingers lie at residues 40 to 68 (RPGE…HPRD), 85 to 113 (RIGQ…HPRN), 131 to 159 (RSNE…HPQP), 274 to 302 (RPGQ…HPRD), and 320 to 348 (RPGE…HPMR). Residues 361–397 (EVVETSTGKSRRLSVSETRQAATTSSGKDTTIDNTQQ) are disordered. Over residues 364–397 (ETSTGKSRRLSVSETRQAATTSSGKDTTIDNTQQ) the composition is skewed to polar residues.

The protein resides in the nucleus. The chain is Zinc finger CCCH domain-containing protein 33 (ZFN1) from Arabidopsis thaliana (Mouse-ear cress).